We begin with the raw amino-acid sequence, 88 residues long: Small ribosomal subunit protein uS15 (88 aa).

Belongs to the universal ribosomal protein uS15 family. Part of the 30S ribosomal subunit. Forms a bridge to the 50S subunit in the 70S ribosome, contacting the 23S rRNA.

Functionally, one of the primary rRNA binding proteins, it binds directly to 16S rRNA where it helps nucleate assembly of the platform of the 30S subunit by binding and bridging several RNA helices of the 16S rRNA. In terms of biological role, forms an intersubunit bridge (bridge B4) with the 23S rRNA of the 50S subunit in the ribosome. The polypeptide is Small ribosomal subunit protein uS15 (Psychrobacter arcticus (strain DSM 17307 / VKM B-2377 / 273-4)).